The following is a 1187-amino-acid chain: uncharacterized protein (1187 aa).

Disordered stretches follow at residues 302–405 (QKSQ…KPVG), 419–451 (QAFS…RASK), 511–551 (KAPG…LRLE), 1095–1134 (KSQR…KLPD), and 1148–1187 (PHLP…PASL). Low complexity predominate over residues 321-333 (LPLSGPAGAPPLG). The segment covering 352–361 (SRRKARHKAS) has biased composition (basic residues). 2 stretches are compositionally biased toward low complexity: residues 422–435 (SPLL…SPAA) and 517–534 (GTTL…GEPP). Residues 1096–1107 (SQRTPQGEQSRN) are compositionally biased toward polar residues. Residues 1160–1174 (TGGSFSSEGTGSQTS) are compositionally biased toward low complexity.

This is an uncharacterized protein from Mus musculus (Mouse).